We begin with the raw amino-acid sequence, 520 residues long: RNA-binding protein MEX3A (520 aa).

The interval 49–111 (GLGEPPAPTA…QPPTAPKGAS (63 aa)) is disordered. The segment covering 60–69 (EDGGGGGGGA) has biased composition (gly residues). Pro residues predominate over residues 73 to 91 (PAAPPQPAPPPPPAAPPAA). KH domains lie at 132–193 (TTEC…RREI) and 223–284 (QVTI…REEI). Ser338 is modified (phosphoserine). Positions 412 to 461 (SSSSAKARAGPPGAHRSPATSAGPELAGLPRRPPGEPLQGFSKLGGGGLR) are disordered. The residue at position 462 (Ser462) is a Phosphoserine. The RING-type zinc finger occupies 469–509 (CMVCFESEVTAALVPCGHNLFCMECAVRICERTDPECPVCH).

In terms of processing, phosphorylated. Highest levels found in fetal brain and testis. Detected also in thymus, salivary gland and uterus.

It is found in the cytoplasm. The protein localises to the nucleus. It localises to the P-body. RNA binding protein, may be involved in post-transcriptional regulatory mechanisms. The polypeptide is RNA-binding protein MEX3A (MEX3A) (Homo sapiens (Human)).